A 225-amino-acid chain; its full sequence is MTKLKDWPNQERPREKLLQKGTAALSDAELLAIFLRTGCRGVDVVTLSKQLLSQFGSLHALFAASESDFCEKKGLGQAKYVQLQAVLEMSSRYLQEPLSKGNALTSAAQTKAFLIAKMHNLPYEVFAAILLDTQHRIIRFHEFFFGSIDCATVHPRIIAQKVLSENAAAIILVHNHPSGDPSASEADKMITQKIVSALQLIDVRVLDHLVVGHKKCTSFAENGWI.

The region spanning 103-225 (ALTSAAQTKA…CTSFAENGWI (123 aa)) is the MPN domain. Histidine 174, histidine 176, and aspartate 187 together coordinate Zn(2+). A JAMM motif motif is present at residues 174–187 (HNHPSGDPSASEAD).

It belongs to the UPF0758 family.

The chain is UPF0758 protein Ping_0056 from Psychromonas ingrahamii (strain DSM 17664 / CCUG 51855 / 37).